The following is a 586-amino-acid chain: Isocitrate dehydrogenase kinase/phosphatase (586 aa).

Residues 316-322 and Lys337 contribute to the ATP site; that span reads ARGDRGL. Asp372 is a catalytic residue.

The protein belongs to the AceK family.

The protein resides in the cytoplasm. The catalysed reaction is L-seryl-[isocitrate dehydrogenase] + ATP = O-phospho-L-seryl-[isocitrate dehydrogenase] + ADP + H(+). Bifunctional enzyme which can phosphorylate or dephosphorylate isocitrate dehydrogenase (IDH) on a specific serine residue. This is a regulatory mechanism which enables bacteria to bypass the Krebs cycle via the glyoxylate shunt in response to the source of carbon. When bacteria are grown on glucose, IDH is fully active and unphosphorylated, but when grown on acetate or ethanol, the activity of IDH declines drastically concomitant with its phosphorylation. The sequence is that of Isocitrate dehydrogenase kinase/phosphatase from Anaeromyxobacter dehalogenans (strain 2CP-C).